The following is a 1288-amino-acid chain: Contactin-associated protein-like 3B (1288 aa).

Residues 1–25 form the signal peptide; sequence MASVAWAVLKVLLLLPTQTWSPVGA. The disordered stretch occupies residues 23–61; sequence VGAGNPPDCDSPLASALPRSSFSSSSELSSSHGPGFSRL. Residues 26–1245 are Extracellular-facing; that stretch reads GNPPDCDSPL…LVNADRRDSA (1220 aa). The F5/8 type C domain maps to 31-177; it reads CDSPLASALP…IGMRIEVYGC (147 aa). 6 disulfides stabilise this stretch: C31–C177, C332–C364, C513–C545, C551–C562, C556–C571, and C573–C583. Low complexity predominate over residues 33-59; the sequence is SPLASALPRSSFSSSSELSSSHGPGFS. Laminin G-like domains lie at 183-364 and 370-545; these read VVYF…SFSC and VPVT…IDSC. N359 carries N-linked (GlcNAc...) asparagine glycosylation. In terms of domain architecture, EGF-like 1 spans 547–584; it reads ITDRCLPSYCEHGGECSQSWDTFSCDCLGTGYTGETCH. In terms of domain architecture, Fibrinogen C-terminal spans 585–792; it reads SSLYEQSCEA…LLCRGDKSFW (208 aa). Residue N706 is glycosylated (N-linked (GlcNAc...) asparagine). The 166-residue stretch at 793-958 folds into the Laminin G-like 3 domain; it reads NSASFNTETS…TVTPGVEPGC (166 aa). 5 cysteine pairs are disulfide-bonded: C931–C958, C962–C975, C969–C984, C986–C996, and C1167–C1203. The 39-residue stretch at 959 to 997 folds into the EGF-like 2 domain; it reads AGHCSTYGHLCRNGGRCREKRRGVTCDCAFSAYDGPFCS. Residues 1016–1203 form the Laminin G-like 4 domain; that stretch reads EHYTLSENSS…RGHVAPMARC (188 aa). The disordered stretch occupies residues 1215–1236; sequence ELAPRLAGGAGRSGPVDEGEPL. The helical transmembrane segment at 1246–1266 threads the bilayer; the sequence is VIGGVIAVEIFILLCITAIAI. Residues 1267 to 1288 lie on the Cytoplasmic side of the membrane; that stretch reads RIYQQRKLRKENESKVSKKEEC.

This sequence belongs to the neurexin family.

It is found in the membrane. The protein is Contactin-associated protein-like 3B (CNTNAP3B) of Homo sapiens (Human).